Here is a 68-residue protein sequence, read N- to C-terminus: Large ribosomal subunit protein bL31 (68 aa).

Zn(2+) is bound by residues cysteine 17, cysteine 19, cysteine 37, and cysteine 40.

This sequence belongs to the bacterial ribosomal protein bL31 family. Type A subfamily. As to quaternary structure, part of the 50S ribosomal subunit. Zn(2+) is required as a cofactor.

Functionally, binds the 23S rRNA. This is Large ribosomal subunit protein bL31 from Dehalococcoides mccartyi (strain ATCC BAA-2266 / KCTC 15142 / 195) (Dehalococcoides ethenogenes (strain 195)).